The following is a 161-amino-acid chain: 2-C-methyl-D-erythritol 2,4-cyclodiphosphate synthase (161 aa).

A divalent metal cation contacts are provided by Asp-11 and His-13. 4-CDP-2-C-methyl-D-erythritol 2-phosphate is bound by residues 11–13 (DIH) and 37–38 (HS). Residue His-45 participates in a divalent metal cation binding. 4-CDP-2-C-methyl-D-erythritol 2-phosphate-binding positions include 59–61 (DIG), 135–138 (TTNE), and Arg-145.

It belongs to the IspF family. In terms of assembly, homotrimer. The cofactor is a divalent metal cation.

It catalyses the reaction 4-CDP-2-C-methyl-D-erythritol 2-phosphate = 2-C-methyl-D-erythritol 2,4-cyclic diphosphate + CMP. It functions in the pathway isoprenoid biosynthesis; isopentenyl diphosphate biosynthesis via DXP pathway; isopentenyl diphosphate from 1-deoxy-D-xylulose 5-phosphate: step 4/6. Its function is as follows. Involved in the biosynthesis of isopentenyl diphosphate (IPP) and dimethylallyl diphosphate (DMAPP), two major building blocks of isoprenoid compounds. Catalyzes the conversion of 4-diphosphocytidyl-2-C-methyl-D-erythritol 2-phosphate (CDP-ME2P) to 2-C-methyl-D-erythritol 2,4-cyclodiphosphate (ME-CPP) with a corresponding release of cytidine 5-monophosphate (CMP). The polypeptide is 2-C-methyl-D-erythritol 2,4-cyclodiphosphate synthase (Synechocystis sp. (strain ATCC 27184 / PCC 6803 / Kazusa)).